A 623-amino-acid chain; its full sequence is Probable lysophospholipase 5 (623 aa).

A signal peptide spans 1 to 19 (MKLSSFGLFLALQLLPALG). Positions 67 to 607 (ACPSGSLLRP…NQYCWNGTIA (541 aa)) constitute a PLA2c domain. Residues N118, N153, N187, N232, N256, N264, N293, N331, N360, N367, N400, N403, N474, N508, N513, N537, N564, N586, and N603 are each glycosylated (N-linked (GlcNAc...) asparagine).

This sequence belongs to the lysophospholipase family.

Its subcellular location is the secreted. The enzyme catalyses a 1-acyl-sn-glycero-3-phosphocholine + H2O = sn-glycerol 3-phosphocholine + a fatty acid + H(+). Its function is as follows. Catalyzes the release of fatty acids from lysophospholipids. The chain is Probable lysophospholipase 5 (plb5) from Schizosaccharomyces pombe (strain 972 / ATCC 24843) (Fission yeast).